A 240-amino-acid chain; its full sequence is Probable 2-phosphosulfolactate phosphatase (240 aa).

The protein belongs to the ComB family. Mg(2+) serves as cofactor.

It carries out the reaction (2R)-O-phospho-3-sulfolactate + H2O = (2R)-3-sulfolactate + phosphate. The chain is Probable 2-phosphosulfolactate phosphatase from Clostridium kluyveri (strain NBRC 12016).